A 393-amino-acid chain; its full sequence is Phosphoglycerate kinase (393 aa).

Residues 22 to 24, Arg37, 60 to 63, Arg119, and Arg152 each bind substrate; these read DFN and HLGR. ATP-binding positions include Lys202, Gly293, Glu324, and 350–353; that span reads GGDS.

Belongs to the phosphoglycerate kinase family. Monomer.

The protein localises to the cytoplasm. The catalysed reaction is (2R)-3-phosphoglycerate + ATP = (2R)-3-phospho-glyceroyl phosphate + ADP. It participates in carbohydrate degradation; glycolysis; pyruvate from D-glyceraldehyde 3-phosphate: step 2/5. The chain is Phosphoglycerate kinase from Borreliella afzelii (strain PKo) (Borrelia afzelii).